The sequence spans 207 residues: p-benzoquinone reductase (207 aa).

The Flavodoxin-like domain maps to 5–196; sequence IQIVFYSSYG…QIARFQGKHV (192 aa). Residues 11-16, 84-86, 119-125, and His140 each bind FMN; these read SSYGHI, TRF, and STASQHG. Tyr13 is an NADP(+) binding site.

This sequence belongs to the WrbA family. In terms of assembly, homodimer. FMN is required as a cofactor.

It carries out the reaction 1,4-benzoquinone + NADPH + H(+) = hydroquinone + NADP(+). It functions in the pathway xenobiotic degradation; 4-nitrophenol degradation. Functionally, involved in the degradation of para-nitrophenol (PNP). Catalyzes the reduction of p-benzoquinone to hydroquinone. The protein is p-benzoquinone reductase (pnpB) of Pseudomonas sp. (strain WBC-3).